A 370-amino-acid polypeptide reads, in one-letter code: 3-isopropylmalate dehydrogenase (370 aa).

77 to 90 is an NAD(+) binding site; that stretch reads GPKWDAVPYDARPE. The substrate site is built by arginine 97, arginine 107, arginine 135, and aspartate 226. 3 residues coordinate Mg(2+): aspartate 226, aspartate 250, and aspartate 254. An NAD(+)-binding site is contributed by 290-302; it reads GSAPDIAGKGLAN.

Belongs to the isocitrate and isopropylmalate dehydrogenases family. LeuB type 1 subfamily. As to quaternary structure, homodimer. The cofactor is Mg(2+). Mn(2+) is required as a cofactor.

Its subcellular location is the cytoplasm. It catalyses the reaction (2R,3S)-3-isopropylmalate + NAD(+) = 4-methyl-2-oxopentanoate + CO2 + NADH. It participates in amino-acid biosynthesis; L-leucine biosynthesis; L-leucine from 3-methyl-2-oxobutanoate: step 3/4. In terms of biological role, catalyzes the oxidation of 3-carboxy-2-hydroxy-4-methylpentanoate (3-isopropylmalate) to 3-carboxy-4-methyl-2-oxopentanoate. The product decarboxylates to 4-methyl-2 oxopentanoate. This is 3-isopropylmalate dehydrogenase from Rhodopseudomonas palustris (strain HaA2).